We begin with the raw amino-acid sequence, 522 residues long: Bifunctional purine biosynthesis protein PurH (522 aa).

The 145-residue stretch at 1–145 (MKPIARALIS…KNHAAVTVIV (145 aa)) folds into the MGS-like domain.

It belongs to the PurH family.

It carries out the reaction (6R)-10-formyltetrahydrofolate + 5-amino-1-(5-phospho-beta-D-ribosyl)imidazole-4-carboxamide = 5-formamido-1-(5-phospho-D-ribosyl)imidazole-4-carboxamide + (6S)-5,6,7,8-tetrahydrofolate. It catalyses the reaction IMP + H2O = 5-formamido-1-(5-phospho-D-ribosyl)imidazole-4-carboxamide. It participates in purine metabolism; IMP biosynthesis via de novo pathway; 5-formamido-1-(5-phospho-D-ribosyl)imidazole-4-carboxamide from 5-amino-1-(5-phospho-D-ribosyl)imidazole-4-carboxamide (10-formyl THF route): step 1/1. The protein operates within purine metabolism; IMP biosynthesis via de novo pathway; IMP from 5-formamido-1-(5-phospho-D-ribosyl)imidazole-4-carboxamide: step 1/1. This chain is Bifunctional purine biosynthesis protein PurH, found in Nitrosococcus oceani (strain ATCC 19707 / BCRC 17464 / JCM 30415 / NCIMB 11848 / C-107).